The chain runs to 452 residues: Pup--protein ligase (452 aa).

Glu9 contacts Mg(2+). An ATP-binding site is contributed by Arg53. Residue Tyr55 coordinates Mg(2+). Asp57 serves as the catalytic Proton acceptor. Glu63 provides a ligand contact to Mg(2+). ATP-binding residues include Thr66 and Trp419.

Belongs to the Pup ligase/Pup deamidase family. Pup-conjugating enzyme subfamily.

The catalysed reaction is ATP + [prokaryotic ubiquitin-like protein]-L-glutamate + [protein]-L-lysine = ADP + phosphate + N(6)-([prokaryotic ubiquitin-like protein]-gamma-L-glutamyl)-[protein]-L-lysine.. The protein operates within protein degradation; proteasomal Pup-dependent pathway. It participates in protein modification; protein pupylation. Functionally, catalyzes the covalent attachment of the prokaryotic ubiquitin-like protein modifier Pup to the proteasomal substrate proteins, thereby targeting them for proteasomal degradation. This tagging system is termed pupylation. The ligation reaction involves the side-chain carboxylate of the C-terminal glutamate of Pup and the side-chain amino group of a substrate lysine. This Saccharomonospora viridis (strain ATCC 15386 / DSM 43017 / JCM 3036 / CCUG 5913 / NBRC 12207 / NCIMB 9602 / P101) (Thermoactinomyces viridis) protein is Pup--protein ligase.